A 160-amino-acid chain; its full sequence is Transcription elongation factor GreA (160 aa).

Positions 2-30 form a coiled coil; sequence SEKTYPMTLAEKEQLEQELEELKLVRRPE.

This sequence belongs to the GreA/GreB family.

Necessary for efficient RNA polymerase transcription elongation past template-encoded arresting sites. The arresting sites in DNA have the property of trapping a certain fraction of elongating RNA polymerases that pass through, resulting in locked ternary complexes. Cleavage of the nascent transcript by cleavage factors such as GreA or GreB allows the resumption of elongation from the new 3'terminus. GreA releases sequences of 2 to 3 nucleotides. This Streptococcus mutans serotype c (strain ATCC 700610 / UA159) protein is Transcription elongation factor GreA.